The chain runs to 179 residues: Large ribosomal subunit protein uL6 (179 aa).

The protein belongs to the universal ribosomal protein uL6 family. Part of the 50S ribosomal subunit.

In terms of biological role, this protein binds to the 23S rRNA, and is important in its secondary structure. It is located near the subunit interface in the base of the L7/L12 stalk, and near the tRNA binding site of the peptidyltransferase center. The polypeptide is Large ribosomal subunit protein uL6 (Bifidobacterium longum subsp. infantis (strain ATCC 15697 / DSM 20088 / JCM 1222 / NCTC 11817 / S12)).